Here is a 370-residue protein sequence, read N- to C-terminus: Nociceptin receptor (370 aa).

Residues 1–48 (MESLFPAPFWEVLYGSPLQGNLSLLSPNHSLLPPHLLLNASHGAFLPL) lie on the Extracellular side of the membrane. N-linked (GlcNAc...) asparagine glycosylation is found at N21, N28, and N39. The helical transmembrane segment at 49–74 (GLKVTIVGLYLAVCVGGLLGNCLVMY) threads the bilayer. The Cytoplasmic portion of the chain corresponds to 75 to 87 (VILRHTKMKTATN). The chain crosses the membrane as a helical span at residues 88–109 (IYIFNLALADTAVLLTLPFQGT). Residues 110-124 (DVLLGFWPFGNALCK) lie on the Extracellular side of the membrane. Cysteines 123 and 200 form a disulfide. The chain crosses the membrane as a helical span at residues 125–146 (AVIAIDYYNMFTSAFTLTAMSV). Topologically, residues 147–165 (DRYVAICHPIRALDVRTSS) are cytoplasmic. A helical transmembrane segment spans residues 166-188 (KAQAVNVAIWALASIVGVPVAIM). Topologically, residues 189-211 (GSAQVEDEEIECLVEIPAPQDYW) are extracellular. Residues 212–236 (GPVFAVCIFLFSFVIPVLIISVCYS) form a helical membrane-spanning segment. Residues 237–264 (LMVRRLRGVRLLSGSREKDRNLRRITRL) are Cytoplasmic-facing. A helical transmembrane segment spans residues 265 to 285 (VLVVVAVFVGCWTPVQVFVLV). Residues 286 to 300 (QGLGVQPGSETAVAV) are Extracellular-facing. A helical membrane pass occupies residues 301 to 322 (LRFCTALGYVNSCLNPILYAFL). Residues 323–370 (DENFKACFRKFCCAPTRRREMQVSDRVRSIAKDVALACKTSETVPRPA) lie on the Cytoplasmic side of the membrane. A lipid anchor (S-palmitoyl cysteine) is attached at C334.

The protein belongs to the G-protein coupled receptor 1 family. Phosphorylation at Ser-363 requires GRK3. Detected in brain cortex, stomach, ileum, jejunum and colon.

The protein localises to the cell membrane. The protein resides in the cytoplasmic vesicle. Its function is as follows. G-protein coupled opioid receptor that functions as a receptor for the endogenous neuropeptide nociceptin. Ligand binding causes a conformation change that triggers signaling via guanine nucleotide-binding proteins (G proteins) and modulates the activity of down-stream effectors. Signaling via G proteins mediates inhibition of adenylate cyclase activity and calcium channel activity. Arrestins modulate signaling via G proteins and mediate the activation of alternative signaling pathways that lead to the activation of MAP kinases. Plays a role in modulating nociception and the perception of pain. Plays a role in the regulation of locomotor activity by the neuropeptide nociceptin. The protein is Nociceptin receptor (OPRL1) of Sus scrofa (Pig).